The primary structure comprises 127 residues: uncharacterized protein (127 aa).

The next 4 helical transmembrane spans lie at 1-21, 32-52, 68-88, and 100-120; these read MYIIMGVFTTIVNIASFYILV, TVAAWILSVLFAYITNKLYVF, AFFSVRVLSLGIDLGMMIILV, and ILDNAVIVVVNYVASKWLVFK.

The protein belongs to the GtrA family.

The protein localises to the cell membrane. This is an uncharacterized protein from Bacillus subtilis (strain 168).